The chain runs to 264 residues: Homeobox protein vent1 (264 aa).

2 stretches are compositionally biased toward basic and acidic residues: residues lysine 16–methionine 26 and tyrosine 44–glutamate 59. Positions lysine 16–glutamine 140 are disordered. Polar residues predominate over residues histidine 60–proline 80. Basic and acidic residues predominate over residues threonine 117–arginine 130. Positions glutamine 129 to isoleucine 188 form a DNA-binding region, homeobox.

As to expression, expressed in the ventral marginal zone of gastrulae. At stage 11.5, also expressed in the ventral region of the animal cap (ectoderm). At the end of gastrulation, predominantly localized to the ventral and lateral regions of the closing slit blastopore. At early tail bud stage, expression is maintained only in the forming proctodeum.

The protein localises to the nucleus. In terms of biological role, transcriptional repressor. Cooperates with vent2 in a ventral signaling pathway downstream of bmp4, which antagonizes the Spemann organizer and dorsal mesoderm formation, and leads to ventral mesoderm formation. Acts downstream of bmp4 to repress transcription of foxa4-B/XFD-1'. Binds to DNA with preference for the target sequence 5'-CTATT[T/C]G-3'. Also binds 5'-TGCATTTTG-3' at a lower frequency, and occasionally 5'-TTGATC-3'. Binds to the homeobox 2 (HBX2) repressor element in the promoter of the myf5 gene and represses myf5 transcription in the ventral domain. The protein is Homeobox protein vent1 (vent1) of Xenopus laevis (African clawed frog).